The sequence spans 301 residues: Acetylglutamate kinase (301 aa).

Substrate is bound by residues 72–73 (GG), R94, and N199.

Belongs to the acetylglutamate kinase family. ArgB subfamily.

It is found in the cytoplasm. It catalyses the reaction N-acetyl-L-glutamate + ATP = N-acetyl-L-glutamyl 5-phosphate + ADP. It participates in amino-acid biosynthesis; L-arginine biosynthesis; N(2)-acetyl-L-ornithine from L-glutamate: step 2/4. In terms of biological role, catalyzes the ATP-dependent phosphorylation of N-acetyl-L-glutamate. The chain is Acetylglutamate kinase from Bartonella bacilliformis (strain ATCC 35685 / KC583 / Herrer 020/F12,63).